The chain runs to 181 residues: ATP synthase subunit delta (181 aa).

The protein belongs to the ATPase delta chain family. As to quaternary structure, F-type ATPases have 2 components, F(1) - the catalytic core - and F(0) - the membrane proton channel. F(1) has five subunits: alpha(3), beta(3), gamma(1), delta(1), epsilon(1). F(0) has three main subunits: a(1), b(2) and c(10-14). The alpha and beta chains form an alternating ring which encloses part of the gamma chain. F(1) is attached to F(0) by a central stalk formed by the gamma and epsilon chains, while a peripheral stalk is formed by the delta and b chains.

Its subcellular location is the cell membrane. F(1)F(0) ATP synthase produces ATP from ADP in the presence of a proton or sodium gradient. F-type ATPases consist of two structural domains, F(1) containing the extramembraneous catalytic core and F(0) containing the membrane proton channel, linked together by a central stalk and a peripheral stalk. During catalysis, ATP synthesis in the catalytic domain of F(1) is coupled via a rotary mechanism of the central stalk subunits to proton translocation. Functionally, this protein is part of the stalk that links CF(0) to CF(1). It either transmits conformational changes from CF(0) to CF(1) or is implicated in proton conduction. The polypeptide is ATP synthase subunit delta (Lactiplantibacillus plantarum (strain ATCC BAA-793 / NCIMB 8826 / WCFS1) (Lactobacillus plantarum)).